Consider the following 126-residue polypeptide: Large ribosomal subunit protein bL20 (126 aa).

This sequence belongs to the bacterial ribosomal protein bL20 family.

Functionally, binds directly to 23S ribosomal RNA and is necessary for the in vitro assembly process of the 50S ribosomal subunit. It is not involved in the protein synthesizing functions of that subunit. The chain is Large ribosomal subunit protein bL20 from Frankia casuarinae (strain DSM 45818 / CECT 9043 / HFP020203 / CcI3).